A 34-amino-acid polypeptide reads, in one-letter code: MSDIN-like toxin proprotein 7 (34 aa).

The propeptide occupies 1–10 (MSDINATRLP). A cross-link (cyclopeptide (Ala-Pro)) is located at residues 11 to 17 (AWLTDCP). The propeptide occupies 18-34 (CVGDDVNRLLTRGESLC).

The protein belongs to the MSDIN fungal toxin family. Processed by the macrocyclase-peptidase enzyme POPB to yield a toxic cyclic heptapeptide. POPB first removes 10 residues from the N-terminus. Conformational trapping of the remaining peptide forces the enzyme to release this intermediate rather than proceed to macrocyclization. The enzyme rebinds the remaining peptide in a different conformation and catalyzes macrocyclization of the N-terminal 7 residues. Expressed in basidiocarps.

Probable toxin that belongs to the MSDIN-like toxin family responsible for a large number of food poisoning cases and deaths. This chain is MSDIN-like toxin proprotein 7, found in Amanita exitialis (Guangzhou destroying angel).